We begin with the raw amino-acid sequence, 541 residues long: Calcium-dependent protein kinase 9 (541 aa).

The tract at residues 1–75 (MGNCFAKNHG…PGLSPKTTTK (75 aa)) is disordered. Gly-2 carries the N-myristoyl glycine lipid modification. Over residues 14-54 (PQQNGNTTRSVEVGVTNQDPPSYTPQARTTQQPEKPGSVNS) the composition is skewed to polar residues. Ser-69 carries the phosphoserine modification. One can recognise a Protein kinase domain in the interval 91 to 349 (YTLGKELGRG…AADVLQHPWL (259 aa)). ATP is bound by residues 97 to 105 (LGRGQFGVT) and Lys-120. Asp-215 (proton acceptor) is an active-site residue. Position 255 is a phosphoserine (Ser-255). An autoinhibitory domain region spans residues 355 to 385 (ASDKPIDSAVLSRMKQFRAMNKLKKLALKVI). EF-hand domains lie at 392 to 427 (EEIQGLKAMFANIDTDNSGTITYEELKEGLAKLGSK), 428 to 463 (LTEAEVKQLMDAADVDGNGSIDYIEFITATMHRHRL), 464 to 499 (ESNENLYKAFQHFDKDSSGYITIDELESALKEYGMG), and 500 to 534 (DDATIKEVLSDVDSDNDGRINYEEFCAMMRSGNPQ). Residues Asp-405, Asp-407, Ser-409, Thr-411, Glu-416, Asp-441, Asp-443, Asn-445, Ser-447, Glu-452, Asp-477, Asp-479, Ser-481, Tyr-483, Glu-488, Asp-512, Asp-514, Asp-516, Arg-518, and Glu-523 each coordinate Ca(2+).

Belongs to the protein kinase superfamily. Ser/Thr protein kinase family. CDPK subfamily.

Its subcellular location is the cell membrane. It catalyses the reaction L-seryl-[protein] + ATP = O-phospho-L-seryl-[protein] + ADP + H(+). The enzyme catalyses L-threonyl-[protein] + ATP = O-phospho-L-threonyl-[protein] + ADP + H(+). Activated by calcium. Autophosphorylation may play an important role in the regulation of the kinase activity. May play a role in signal transduction pathways that involve calcium as a second messenger. This Arabidopsis thaliana (Mouse-ear cress) protein is Calcium-dependent protein kinase 9 (CPK9).